The chain runs to 270 residues: MSSSPDIAGILDNTKELDRLRKEQEEVLVEINKMHKKLQATPEIVEKPGDISLSKLKNLYIQAKELSESEVTVSNILLTQLDSLLPSGPTGQQRRKLEGNEQKRKRMKVDTDVTRVSPSMRNQIEAYASLKGEQVAARVTAEDAEKDEWFVVKVIHFDRETKEVEVLDEEPGDDEEGGGQRTYKLSMSCILPFPKRNDPSSTQEFIPGKHVLAVYPGTTALYKATVISTPRKRKSDEYLLEFDDDEEDGALPQRTVPFHKVVALPEGHRQ.

S2 carries the post-translational modification N-acetylserine. The disordered stretch occupies residues 85 to 113; it reads LPSGPTGQQRRKLEGNEQKRKRMKVDTDV. A compositionally biased stretch (basic and acidic residues) spans 95-113; that stretch reads RKLEGNEQKRKRMKVDTDV. In terms of domain architecture, SGF29 C-terminal spans 125–270; sequence EAYASLKGEQ…VVALPEGHRQ (146 aa). Histone H3K4me3 N-terminus binding stretches follow at residues 168 to 170 and 217 to 220; these read DEE and GTTA. The tract at residues 242-245 is histone H3K4me3 binding; that stretch reads FDDD.

This sequence belongs to the SGF29 family. In terms of tissue distribution, expressed in roots, rosette leaves, cauline leaves, stems and flowers.

Its subcellular location is the nucleus. In terms of biological role, chromatin reader component of the transcription regulatory histone acetylation (HAT) complex SAGA. Involved in salt stress tolerance. Enhances the effect of ADA2B in the positive regulation of salt-induced gene expression. The chain is SAGA-associated factor 29 homolog A from Arabidopsis thaliana (Mouse-ear cress).